A 473-amino-acid polypeptide reads, in one-letter code: Cysteine protease ATG4A (473 aa).

The tract at residues 1-33 is disordered; the sequence is MTSLPGRGVSPSSSDPLCEGNAAPSSSSSGQDL. The active-site Nucleophile is Cys160. Active-site residues include Asp357 and His359.

Belongs to the peptidase C54 family. In terms of assembly, interacts with ATG8.

It is found in the cytoplasm. The catalysed reaction is [protein]-C-terminal L-amino acid-glycyl-phosphatidylethanolamide + H2O = [protein]-C-terminal L-amino acid-glycine + a 1,2-diacyl-sn-glycero-3-phosphoethanolamine. Functionally, cysteine protease that plays a key role in autophagy by mediating both proteolytic activation and delipidation of ATG8 family proteins. The protease activity is required for proteolytic activation of ATG8 family proteins: cleaves the C-terminal amino acid of ATG8 proteins to reveal a C-terminal glycine. Exposure of the glycine at the C-terminus is essential for ATG8 proteins conjugation to phosphatidylethanolamine (PE) and insertion to membranes, which is necessary for autophagy. In addition to the protease activity, also mediates delipidation of PE-conjugated ATG8 proteins. This chain is Cysteine protease ATG4A (ATG4A), found in Oryza sativa subsp. indica (Rice).